We begin with the raw amino-acid sequence, 1108 residues long: Unconventional myosin-Ie (1108 aa).

The Myosin motor domain maps to serine 19–glutamate 692. Residue glycine 112–threonine 119 coordinates ATP. The interval proline 581–glutamate 591 is actin-binding. Positions tyrosine 695 to aspartate 724 constitute an IQ domain. The TH1 domain maps to lysine 730–proline 922. The tract at residues serine 919–valine 966 is disordered. The span at arginine 933–asparagine 949 shows a compositional bias: polar residues. Phosphoserine is present on residues serine 980 and serine 1002. The tract at residues alanine 993–valine 1053 is disordered. Polar residues predominate over residues arginine 999–glutamate 1013. The segment covering arginine 1035 to glutamine 1052 has biased composition (pro residues). The region spanning proline 1051–isoleucine 1108 is the SH3 domain.

It belongs to the TRAFAC class myosin-kinesin ATPase superfamily. Myosin family. Interacts with CALM and F-actin. Interacts (via SH3 domain) with SYNJ1, DNM1 and DNM2. Interacts with ARL14EP. Interacts with CARMIL1. As to expression, expressed in the immune system. In the kidney, predominantly expressed in the glomerulus, including podocytes.

It is found in the cytoplasm. Its subcellular location is the cytoskeleton. The protein localises to the cytoplasmic vesicle. It localises to the clathrin-coated vesicle. The protein resides in the cell junction. Actin-based motor molecule with ATPase activity. Unconventional myosins serve in intracellular movements. Their highly divergent tails bind to membranous compartments, which are then moved relative to actin filaments. Binds to membranes containing anionic phospholipids via its tail domain. Involved in clathrin-mediated endocytosis and intracellular movement of clathrin-coated vesicles. Required for normal morphology of the glomerular basement membrane, normal development of foot processes by kidney podocytes and normal kidney function. In dendritic cells, may control the movement of class II-containing cytoplasmic vesicles along the actin cytoskeleton by connecting them with the actin network via ARL14EP and ARL14. The polypeptide is Unconventional myosin-Ie (MYO1E) (Homo sapiens (Human)).